The following is a 1278-amino-acid chain: Sterol regulatory element-binding protein cleavage-activating protein (1278 aa).

Over 1–18 (MTLTERLREKISQAFYNH) the chain is Cytoplasmic. A helical transmembrane segment spans residues 19–39 (GLFCASYPIPIILFTGLCILA). The Lumenal segment spans residues 40-279 (CCYPLLKLPL…SLVHVHFKEE (240 aa)). The tract at residues 46 to 284 (KLPLPGTGPV…HFKEEIGIAE (239 aa)) is loop-1. Residues 60–80 (PVKDYSPPPLTSDHKPGEPNE) are disordered. Residue N263 is glycosylated (N-linked (GlcNAc...) asparagine). The chain crosses the membrane as a helical span at residues 280–300 (IGIAELIPLVTTYIILFAYIY). An SSD domain is found at 284 to 442 (ELIPLVTTYI…MLFFTTVLSI (159 aa)). At 301–312 (FSTRKIDMVKSK) the chain is on the cytoplasmic side. Residues 313–333 (WGLALAAVVTVLSSLLMSVGL) traverse the membrane as a helical segment. Residues 334–344 (CTLFGLTPTLN) lie on the Lumenal side of the membrane. The chain crosses the membrane as a helical span at residues 345–365 (GGEIFPYLVVVIGLENVLVLT). The Cytoplasmic segment spans residues 366–401 (KSVVSTPVDLEVKLRIAQGLSSESWSIMKNMATELG). A helical transmembrane segment spans residues 402–422 (IVLIGYFTLVPAIQEFCLFAV). A topological domain (lumenal) is located at residue V423. A helical transmembrane segment spans residues 424–444 (GLVSDFFLQMLFFTTVLSIDI). The Cytoplasmic portion of the chain corresponds to 445–518 (RRMELADLNK…FLARTRLAQR (74 aa)). The short motif at 447–452 (MELADL) is the ER export signal element. Glycyl lysine isopeptide (Lys-Gly) (interchain with G-Cter in ubiquitin) cross-links involve residues K454 and K466. A helical transmembrane segment spans residues 519–539 (LIMAGTVVWIGILVYTDPAGL). The segment at 535-710 (DPAGLRTYLA…QAQRDLTLYK (176 aa)) is loop-7. Over 540–707 (RTYLAAQVTE…GTAQAQRDLT (168 aa)) the chain is Lumenal. Positions 581–618 (PPDASKLPENQTLPGEPPEPGGLAEGVHDSPAPEVTWG) are disordered. Residues N590 and N641 are each glycosylated (N-linked (GlcNAc...) asparagine). Positions 668–696 (EGRHPQDGRSAWPPPRPGQGGLWEAGPKG) are disordered. A helical membrane pass occupies residues 708–728 (LYKVAALGLASGIVLVLLLLC). Topologically, residues 729–1278 (LYRVLCPRNY…YVPSVLEKLD (550 aa)) are cytoplasmic. Positions 731–1278 (RVLCPRNYGQ…YVPSVLEKLD (548 aa)) are interaction with SREBF2. The stretch at 771–811 (VLRGHLMDIECLASDGMLLVSCCLAGHVCVWDAQTGDCLTR) is one WD 1 repeat. S821, S837, S850, S905, and S935 each carry phosphoserine. Residues 834-904 (ERLSDGGKGG…RYRAGRRAQD (71 aa)) are disordered. 2 WD repeats span residues 951 to 1001 (PPEK…LRCS) and 1004 to 1041 (EVSSGITALVFLDRRIVAARLNGSLDFFSLETHTALSP). Position 1050 is an omega-N-methylarginine (R1050). 4 WD repeats span residues 1076 to 1113 (AHQKPITALKAAAGRLVTGSQDHTLRVFRLEDSCCLFT), 1116 to 1154 (GHSGAITTVYIDQTMVLASGGQDGAICLWDVLTGSRVSH), 1157 to 1194 (AHRGDVTSLTCTTSCVISSGLDDLISIWDRSTGIKLYS), and 1196 to 1234 (QQDLGCGASLGVISDNLLVTGGQGCVSFWDLNYGDLLQT).

The protein belongs to the WD repeat SCAP family. Membrane region forms a homotetramer. Component of the SCAP-SREBP complex (composed of SCAP and SREBF1/SREBP1 or SREBF2/SREBP2); interacts with SREBF1/SREBP1 or SREBF2/SREBP2 through its C-terminal cytoplasmic domain. Forms a ternary complex with INSIG1 or INSIG2 through its transmembrane domains at high sterol concentrations. Interacts with PAQR3; the interaction anchors the SCAP-SREBP complex to the Golgi apparatus in low cholesterol conditions. Interacts with the SEC23-SEC24 complex in a SAR1-GTP-dependent manner through an ER export signal in its third cytoplasmic loop. Interacts with RNF139; the interaction inhibits the interaction of SCAP with SEC24B and hampering the ER to Golgi transport of the SCAP-SREBP complex. Interacts with SPRING1. Post-translationally, ubiquitinated at Lys-454 and Lys-466. RNF145 triggers ubiquitination of SCAP, likely inhibiting SCAP-SREBP complex transport to the Golgi apparatus and the subsequent processing/maturation of SREBF2/SREBP2.

The protein localises to the endoplasmic reticulum membrane. It is found in the golgi apparatus membrane. It localises to the cytoplasmic vesicle. The protein resides in the COPII-coated vesicle membrane. Escort protein required for cholesterol as well as lipid homeostasis. Regulates export of the SCAP-SREBP complex from the endoplasmic reticulum to the Golgi upon low cholesterol, thereby regulating the processing of sterol regulatory element-binding proteins (SREBPs) SREBF1/SREBP1 and SREBF2/SREBP2. At high sterol concentrations, formation of a ternary complex with INSIG (INSIG1 or INSIG2) leads to mask the ER export signal in SCAP, promoting retention of the complex in the endoplasmic reticulum. Low sterol concentrations trigger release of INSIG, a conformational change in the SSD domain of SCAP, unmasking of the ER export signal, promoting recruitment into COPII-coated vesicles and transport of the SCAP-SREBP to the Golgi: in the Golgi, SREBPs are then processed, releasing the transcription factor fragment of SREBPs from the membrane, its import into the nucleus and up-regulation of LDLR, INSIG1 and the mevalonate pathway. Binds cholesterol via its SSD domain. This is Sterol regulatory element-binding protein cleavage-activating protein from Bos taurus (Bovine).